We begin with the raw amino-acid sequence, 524 residues long: Probable pectinesterase/pectinesterase inhibitor 42 (524 aa).

Positions 1–22 are cleaved as a signal peptide; the sequence is MLVKVFSFFILMITMVVIGVSK. Residues 23 to 172 form a pectinesterase inhibitor 42 region; sequence EYCDDKHSCQ…ISKAKVALAL (150 aa). The interval 215–510 is pectinesterase 42; the sequence is DVVVAKDGTG…FTVAKLLDGE (296 aa). Asparagine 265 and asparagine 281 each carry an N-linked (GlcNAc...) asparagine glycan. Threonine 290 is a substrate binding site. Aspartate 343 acts as the Proton donor; for pectinesterase activity in catalysis. Cysteine 357 and cysteine 377 are oxidised to a cystine. The active-site Nucleophile; for pectinesterase activity is the aspartate 364. Asparagine 412 carries N-linked (GlcNAc...) asparagine glycosylation. Substrate contacts are provided by arginine 430 and tryptophan 432.

It in the N-terminal section; belongs to the PMEI family. In the C-terminal section; belongs to the pectinesterase family. Expressed in siliques but not in flower buds.

The protein resides in the secreted. It is found in the cell wall. It catalyses the reaction [(1-&gt;4)-alpha-D-galacturonosyl methyl ester](n) + n H2O = [(1-&gt;4)-alpha-D-galacturonosyl](n) + n methanol + n H(+). It participates in glycan metabolism; pectin degradation; 2-dehydro-3-deoxy-D-gluconate from pectin: step 1/5. Functionally, acts in the modification of cell walls via demethylesterification of cell wall pectin. The sequence is that of Probable pectinesterase/pectinesterase inhibitor 42 (PME42) from Arabidopsis thaliana (Mouse-ear cress).